Here is a 235-residue protein sequence, read N- to C-terminus: Endonuclease V (235 aa).

Mg(2+) is bound by residues Asp-47 and Asp-117.

It belongs to the endonuclease V family. Mg(2+) serves as cofactor.

The protein resides in the cytoplasm. It carries out the reaction Endonucleolytic cleavage at apurinic or apyrimidinic sites to products with a 5'-phosphate.. Its function is as follows. DNA repair enzyme involved in the repair of deaminated bases. Selectively cleaves double-stranded DNA at the second phosphodiester bond 3' to a deoxyinosine leaving behind the intact lesion on the nicked DNA. The polypeptide is Endonuclease V (Protochlamydia amoebophila (strain UWE25)).